The primary structure comprises 236 residues: MSYNFTDPYEIARFIKEVKKSTPVKVYLKGNLEGVELGSIECYGNNDFYVLFGESDEVATFLTENKDKIVSFRLENDRRNSAIPMLELLNINARIEPGAIIRDRVSIGDNAVIMMGAVINIGAEIGESTMVDMNAVIGARGKLGKRVHLGAGAVVAGVLEPPSKTPCIIEDDVLIGANAVILEGVKIGKGSVVAAGSVVVEDVPAGVVVAGTPAKIIKSVDEKTKDKTEILDDLRK.

It belongs to the transferase hexapeptide repeat family. DapH subfamily.

The catalysed reaction is (S)-2,3,4,5-tetrahydrodipicolinate + acetyl-CoA + H2O = L-2-acetamido-6-oxoheptanedioate + CoA. Its pathway is amino-acid biosynthesis; L-lysine biosynthesis via DAP pathway; LL-2,6-diaminopimelate from (S)-tetrahydrodipicolinate (acetylase route): step 1/3. Its function is as follows. Catalyzes the transfer of an acetyl group from acetyl-CoA to tetrahydrodipicolinate. This Clostridium perfringens (strain SM101 / Type A) protein is 2,3,4,5-tetrahydropyridine-2,6-dicarboxylate N-acetyltransferase.